We begin with the raw amino-acid sequence, 710 residues long: DNA polymerase epsilon subunit B (710 aa).

A disordered region spans residues 116–167; it reads FLKRPNSPTDTEITTLSQGSATSVVNPDSHSPMMLEEGSPINSDSEPISEHE. Residues 121 to 144 are compositionally biased toward polar residues; it reads NSPTDTEITTLSQGSATSVVNPDS.

The protein belongs to the DNA polymerase epsilon subunit B family. As to quaternary structure, heterotetramer. Consists of four subunits: POL2, DPB2, DPB3 and DPB4.

The protein localises to the nucleus. Its function is as follows. As accessory component of the DNA polymerase epsilon (DNA polymerase II) participates in chromosomal DNA replication. This is DNA polymerase epsilon subunit B (DPB2) from Kluyveromyces lactis (strain ATCC 8585 / CBS 2359 / DSM 70799 / NBRC 1267 / NRRL Y-1140 / WM37) (Yeast).